The chain runs to 142 residues: MRNHDLSPLLRQWIGFDKLANALQSTAEHQAFPPYNIEKSDDNHYRITLALAGFRQDDLDIQLEGTRLTVKGTPEKPETETKWLHQGLVIQPFSLSFTLADHMEVTGATFTNGLLHIDLTRNVPEALAPQRIAISDRPALNS.

Residues 26–137 (TAEHQAFPPY…APQRIAISDR (112 aa)) enclose the sHSP domain.

This sequence belongs to the small heat shock protein (HSP20) family. Homodimer. Forms homomultimers of about 100-150 subunits at optimal growth temperatures. Conformation changes to oligomers at high temperatures or high ionic concentrations. The decrease in size of the multimers is accompanied by an increase in chaperone activity.

The protein resides in the cytoplasm. Associates with aggregated proteins, together with IbpA, to stabilize and protect them from irreversible denaturation and extensive proteolysis during heat shock and oxidative stress. Aggregated proteins bound to the IbpAB complex are more efficiently refolded and reactivated by the ATP-dependent chaperone systems ClpB and DnaK/DnaJ/GrpE. Its activity is ATP-independent. The chain is Small heat shock protein IbpB from Enterobacter sp. (strain 638).